A 1150-amino-acid polypeptide reads, in one-letter code: MSLRFIYGRAGSGKSQYCLNSIKNRIEEDIDRPLILLVPEQFSFQAEKNLIEVLDEKTGFKTQVLSFKRMAYRVFNEVGGITAKHMNESGKSMLLYNIIEDNKNNLKVFKKAAKRQGFITTISDIITEFKRYNITPEIILNNLENIEGDNLKYKMEDLALIFSQFETRLHKNYIDNEDDLTILAEKLNKSKQFDNAEIWIDEFSSFSPQEYSVLEKLLLKSYRINITLCTDYLNQGRFVDTTDVFSPIKNTENKLLQIIEDNNIKLDKPIALNCDPCARFKNSAELQHLEKNMFSFPYKEYKNETKDICMLKTLNQFTEIENTAKDIIKLCIDKGCRFKDIAVITGDLEGYENIISSVFLQYNIPFFIDKKREINNNPIIVLILSALEVLSKNWTYESVFRYLKTGLLDINNEEMDILENYVLANGIKGYQWTNDKPWEHKFFSNYELEDQVEKELLAKINDIRYKAMEPIVTLNKNFKSIDKAKEFCEVLYEFLCNINLPDKIQNMIEDFKVEGEIEKASEYNQIWNIVMEVLDQIVEVIGEEKISLKEFFKILQTGLSEYEIGLIPPTLDQVMVGSITRLRSHNINTLYIVGVNDGIFPSPLKEEGILSDDDRKFLGDKGLEIAKDTKSIAFEEQFLVYSTLTTPSKYLRLSYPIADGEGKTLRPSIIISRIKKIFTNICEENDIVKLNGEEEELKNISSAKPTFNYLISNLRKDVEGAKIDNIWGDTYKWYLENEFWIEKLNRLIKGFDYTNQSKYIETKKIRNLYGKPLKISVSRVEKFSQCPFAYFVQYGLKAKDRKIFNLSYPDLGIFMHSILEKFSHELEKQGLEWDTMDLNWAEEEIDKLINEELDNKSLDILNSSKRYEYVTKSVKKILKRSIWLIGEHIKRGNFKPSYYELSFDIDGDYPPIAMELHSGEVVNLIGRVDRVDLLQKDGATYLKIIDYKSGAKEFKLSDVYYGLQLQLLIYLDAILTELAERSGINGEPGALLYLKLDDPIVKNTVDMSDEEIEKSIIKNLKMKGLILNDPNVIRDMDNIISGISDIIPVMVKKDGGVSEGRSSVATKEEFETLRKYVRYTIIEICEEMLEGNIEIKPYKKKDGSSCDYCIYSSVCKFDTNIRGNKYNILIDKKDEEVWDAIKKKLEYKNI.

8–15 provides a ligand contact to ATP; sequence GRAGSGKS. [4Fe-4S] cluster is bound by residues Cys-786, Cys-1106, Cys-1109, and Cys-1115.

This sequence belongs to the helicase family. AddB/RexB type 1 subfamily. As to quaternary structure, heterodimer of AddA and AddB. Requires Mg(2+) as cofactor. It depends on [4Fe-4S] cluster as a cofactor.

Functionally, the heterodimer acts as both an ATP-dependent DNA helicase and an ATP-dependent, dual-direction single-stranded exonuclease. Recognizes the chi site generating a DNA molecule suitable for the initiation of homologous recombination. The AddB subunit has 5' -&gt; 3' nuclease activity but not helicase activity. The chain is ATP-dependent helicase/deoxyribonuclease subunit B from Clostridium botulinum (strain Hall / ATCC 3502 / NCTC 13319 / Type A).